The following is a 286-amino-acid chain: Pyridoxal kinase PdxY (286 aa).

Residues S9 and T44 to Q45 contribute to the substrate site. ATP-binding residues include D111, E148, and K181. D222 is a substrate binding site.

Belongs to the pyridoxine kinase family. PdxY subfamily. As to quaternary structure, homodimer. Mg(2+) serves as cofactor.

It carries out the reaction pyridoxal + ATP = pyridoxal 5'-phosphate + ADP + H(+). Its pathway is cofactor metabolism; pyridoxal 5'-phosphate salvage; pyridoxal 5'-phosphate from pyridoxal: step 1/1. Functionally, pyridoxal kinase involved in the salvage pathway of pyridoxal 5'-phosphate (PLP). Catalyzes the phosphorylation of pyridoxal to PLP. The sequence is that of Pyridoxal kinase PdxY from Pasteurella multocida (strain Pm70).